The chain runs to 880 residues: Leucine--tRNA ligase (880 aa).

The short motif at 46-56 is the 'HIGH' region element; that stretch reads PYPSGALHMGH. The 'KMSKS' region signature appears at 638–642; the sequence is KMSKS. ATP is bound at residue Lys-641.

It belongs to the class-I aminoacyl-tRNA synthetase family.

The protein localises to the cytoplasm. It carries out the reaction tRNA(Leu) + L-leucine + ATP = L-leucyl-tRNA(Leu) + AMP + diphosphate. In Stenotrophomonas maltophilia (strain R551-3), this protein is Leucine--tRNA ligase.